Here is a 99-residue protein sequence, read N- to C-terminus: Small ribosomal subunit protein bS20 (99 aa).

Belongs to the bacterial ribosomal protein bS20 family.

Its function is as follows. Binds directly to 16S ribosomal RNA. This is Small ribosomal subunit protein bS20 from Cyanothece sp. (strain PCC 7425 / ATCC 29141).